A 160-amino-acid polypeptide reads, in one-letter code: Baculoviral IAP repeat-containing protein 5.1-A (160 aa).

Residues 27-97 form a BIR repeat; that stretch reads RLATFADWPF…KRSANCGFLS (71 aa). Phosphothreonine; by CDK1 is present on T43. Zn(2+)-binding residues include C66, C69, H86, and C93.

It belongs to the IAP family. Component of the CPC at least composed of survivin/birc5, incenp, cdca8/borealin and/or cdca9/dasra-A, and aurkb/aurora-B. Interacts directly with incenp (via N-terminus), and may weakly interact with aurkb (via N-terminus) to stabilize the complex. Interacts with GTP-bound ran in both the S and M phases of the cell cycle. Also found in a complex with ubiquitin-mediated signaling proteins including at least usp9x/xFAM, nploc4/npl4 and ufd1. In terms of processing, ubiquitination is required for centrosome-targeting.

The protein localises to the cytoplasm. The protein resides in the nucleus. Its subcellular location is the chromosome. It is found in the centromere. It localises to the cytoskeleton. The protein localises to the spindle. In terms of biological role, component of the chromosomal passenger complex (CPC), a complex that acts as a key regulator of mitosis. The CPC complex has essential functions at the centromere in ensuring correct chromosome alignment and segregation and is required for chromatin-induced microtubule stabilization and spindle assembly. Stimulates the mitotic kinase activity of aurkb/aurora-B in the CPC. Does not appear to exhibit anti-apoptotic activity. In Xenopus laevis (African clawed frog), this protein is Baculoviral IAP repeat-containing protein 5.1-A (birc5.1-a).